Here is a 470-residue protein sequence, read N- to C-terminus: Alpha-1A adrenergic receptor (470 aa).

Residues 1-27 are Extracellular-facing; sequence MTPSSVTLNCSNCSHVLAPELNTVKAV. N-linked (GlcNAc...) asparagine glycans are attached at residues N9 and N12. The chain crosses the membrane as a helical span at residues 28-51; the sequence is VLGMVLGIFILFGVIGNILVILSV. Residues 52 to 64 are Cytoplasmic-facing; the sequence is VCHRHLQTVTYYF. The chain crosses the membrane as a helical span at residues 65–88; the sequence is IVNLAVADLLLSSTVLPFSAIFEI. The Extracellular portion of the chain corresponds to 89–99; that stretch reads LDRWVFGRVFC. C99 and C176 are joined by a disulfide. Residues 100–122 traverse the membrane as a helical segment; sequence NIWAAVDVLCCTASIMSLCVISV. Residues 123–143 lie on the Cytoplasmic side of the membrane; the sequence is DRYIGVSYPLRYPAIMTKRRA. A helical membrane pass occupies residues 144-167; sequence LLAVMLLWVLSVIISIGPLFGWKE. Topologically, residues 168 to 181 are extracellular; the sequence is PAPEDETVCKITEE. Residues 182 to 205 form a helical membrane-spanning segment; the sequence is PGYAIFSAVGSFYLPLAIILAMYC. The Cytoplasmic portion of the chain corresponds to 206 to 271; the sequence is RVYVVAQKES…FSREKKAAKT (66 aa). The chain crosses the membrane as a helical span at residues 272–295; the sequence is LGIVVGCFVLCWLPFFLVLPIGSI. Residues 296-303 lie on the Extracellular side of the membrane; sequence FPAYRPSD. The chain crosses the membrane as a helical span at residues 304 to 327; that stretch reads TVFKITFWLGYFNSCINPIIYLCS. Residues 328–470 are Cytoplasmic-facing; sequence NQEFKKAFQS…LSLSEKGESV (143 aa). C343 carries the S-palmitoyl cysteine lipid modification. Residues 375-416 are disordered; it reads GAPCRLSPSSSVALSRTPSSRDSREWRVFSGGPINSGPGPTE. Residues 381–392 show a composition bias toward polar residues; that stretch reads SPSSSVALSRTP.

This sequence belongs to the G-protein coupled receptor 1 family. Adrenergic receptor subfamily. ADRA1A sub-subfamily.

It localises to the cell membrane. In terms of biological role, this alpha-adrenergic receptor mediates its action by association with G proteins that activate a phosphatidylinositol-calcium second messenger system. In Oryzias latipes (Japanese rice fish), this protein is Alpha-1A adrenergic receptor (adra1a).